A 431-amino-acid polypeptide reads, in one-letter code: 4-hydroxy-3-methylbut-2-en-1-yl diphosphate synthase (flavodoxin) (431 aa).

The segment at 1–21 (MNKLENPSQRDVAGPSPRHKT) is disordered. [4Fe-4S] cluster is bound by residues Cys310, Cys313, Cys356, and Glu363.

Belongs to the IspG family. [4Fe-4S] cluster is required as a cofactor.

It catalyses the reaction (2E)-4-hydroxy-3-methylbut-2-enyl diphosphate + oxidized [flavodoxin] + H2O + 2 H(+) = 2-C-methyl-D-erythritol 2,4-cyclic diphosphate + reduced [flavodoxin]. It functions in the pathway isoprenoid biosynthesis; isopentenyl diphosphate biosynthesis via DXP pathway; isopentenyl diphosphate from 1-deoxy-D-xylulose 5-phosphate: step 5/6. Its function is as follows. Converts 2C-methyl-D-erythritol 2,4-cyclodiphosphate (ME-2,4cPP) into 1-hydroxy-2-methyl-2-(E)-butenyl 4-diphosphate. The polypeptide is 4-hydroxy-3-methylbut-2-en-1-yl diphosphate synthase (flavodoxin) (Nitrobacter hamburgensis (strain DSM 10229 / NCIMB 13809 / X14)).